A 138-amino-acid chain; its full sequence is Putative pre-16S rRNA nuclease (138 aa).

The protein belongs to the YqgF nuclease family.

It localises to the cytoplasm. Could be a nuclease involved in processing of the 5'-end of pre-16S rRNA. This is Putative pre-16S rRNA nuclease from Haemophilus ducreyi (strain 35000HP / ATCC 700724).